We begin with the raw amino-acid sequence, 241 residues long: Ribonuclease PH (241 aa).

Phosphate is bound by residues Arg-89 and Gly-127–Arg-129.

This sequence belongs to the RNase PH family. Homohexameric ring arranged as a trimer of dimers.

It carries out the reaction tRNA(n+1) + phosphate = tRNA(n) + a ribonucleoside 5'-diphosphate. Functionally, phosphorolytic 3'-5' exoribonuclease that plays an important role in tRNA 3'-end maturation. Removes nucleotide residues following the 3'-CCA terminus of tRNAs; can also add nucleotides to the ends of RNA molecules by using nucleoside diphosphates as substrates, but this may not be physiologically important. Probably plays a role in initiation of 16S rRNA degradation (leading to ribosome degradation) during starvation. This Stenotrophomonas maltophilia (strain K279a) protein is Ribonuclease PH.